The following is a 159-amino-acid chain: Transcriptional repressor NrdR (159 aa).

The interval 1–22 (MRCPFCGSEDTQVKDSRPAEDN) is disordered. Residues 3–34 (CPFCGSEDTQVKDSRPAEDNTSIRRRRICPDC) fold into a zinc finger. Residues 11–22 (TQVKDSRPAEDN) are compositionally biased toward basic and acidic residues. An ATP-cone domain is found at 49-139 (LMVIKKSGRK…VYRDFSHAED (91 aa)).

Belongs to the NrdR family. It depends on Zn(2+) as a cofactor.

Its function is as follows. Negatively regulates transcription of bacterial ribonucleotide reductase nrd genes and operons by binding to NrdR-boxes. The chain is Transcriptional repressor NrdR from Agrobacterium fabrum (strain C58 / ATCC 33970) (Agrobacterium tumefaciens (strain C58)).